Here is a 306-residue protein sequence, read N- to C-terminus: MNDYNHYFHFPREEWRKLEVSKDQILTAEELEEIRGLNDRISLQDISEIYLPLIKLIAIQYHEAIFIHGEKMEYLKKKESRAPFIIALAGSVAVGKSTTARVFKLMLDRWFSKTRQVELVTTDGFLYPNKVLEERGIMDKKGFPESYDRDRFAKFLTDLKANKEDVEVPLYSHFTYDVLDETRMMHNPDIVIIEGINVLQADQHESLYPSDFFDFSVYMDANEADIKNWYLERFFMLRETAFQDESSYFHPYTKISKKEAETFALGVWDTINGVNLKENIEKTKYRADLVLHKGTDHLISDIYLRK.

An ATP-binding site is contributed by 90-97 (GSVAVGKS).

It belongs to the prokaryotic pantothenate kinase family.

The protein localises to the cytoplasm. It catalyses the reaction (R)-pantothenate + ATP = (R)-4'-phosphopantothenate + ADP + H(+). It participates in cofactor biosynthesis; coenzyme A biosynthesis; CoA from (R)-pantothenate: step 1/5. In Listeria innocua serovar 6a (strain ATCC BAA-680 / CLIP 11262), this protein is Pantothenate kinase (coaA).